Consider the following 570-residue polypeptide: Dihydroxy-acid dehydratase 2 (570 aa).

C51 contributes to the [2Fe-2S] cluster binding site. D83 is a binding site for Mg(2+). Residue C124 participates in [2Fe-2S] cluster binding. Mg(2+) contacts are provided by D125 and K126. Position 126 is an N6-carboxylysine (K126). A [2Fe-2S] cluster-binding site is contributed by C196. E446 contacts Mg(2+). Catalysis depends on S472, which acts as the Proton acceptor.

Belongs to the IlvD/Edd family. In terms of assembly, homodimer. Requires [2Fe-2S] cluster as cofactor. Mg(2+) serves as cofactor.

It catalyses the reaction (2R)-2,3-dihydroxy-3-methylbutanoate = 3-methyl-2-oxobutanoate + H2O. It carries out the reaction (2R,3R)-2,3-dihydroxy-3-methylpentanoate = (S)-3-methyl-2-oxopentanoate + H2O. It participates in amino-acid biosynthesis; L-isoleucine biosynthesis; L-isoleucine from 2-oxobutanoate: step 3/4. It functions in the pathway amino-acid biosynthesis; L-valine biosynthesis; L-valine from pyruvate: step 3/4. Its function is as follows. Functions in the biosynthesis of branched-chain amino acids. Catalyzes the dehydration of (2R,3R)-2,3-dihydroxy-3-methylpentanoate (2,3-dihydroxy-3-methylvalerate) into 2-oxo-3-methylpentanoate (2-oxo-3-methylvalerate) and of (2R)-2,3-dihydroxy-3-methylbutanoate (2,3-dihydroxyisovalerate) into 2-oxo-3-methylbutanoate (2-oxoisovalerate), the penultimate precursor to L-isoleucine and L-valine, respectively. This Bordetella bronchiseptica (strain ATCC BAA-588 / NCTC 13252 / RB50) (Alcaligenes bronchisepticus) protein is Dihydroxy-acid dehydratase 2.